We begin with the raw amino-acid sequence, 179 residues long: Putative endogenous retrovirus group FC1 Env polyprotein (179 aa).

The first 22 residues, Met-1–Ser-22, serve as a signal peptide directing secretion. The interval Asn-23–Val-179 is truncated surface protein. Residue Asn-69 is glycosylated (N-linked (GlcNAc...) asparagine).

It belongs to the gamma type-C retroviral envelope protein family. HERV class-I F(c)1 env subfamily.

The protein resides in the virion. Functionally, retroviral envelope proteins mediate receptor recognition and membrane fusion during early infection. Endogenous envelope proteins may have kept, lost or modified their original function during evolution. This chain is Putative endogenous retrovirus group FC1 Env polyprotein (ERVFC1), found in Gorilla gorilla gorilla (Western lowland gorilla).